The primary structure comprises 408 residues: Succinylornithine transaminase (408 aa).

N6-(pyridoxal phosphate)lysine is present on Lys-252.

The protein belongs to the class-III pyridoxal-phosphate-dependent aminotransferase family. AstC subfamily. Requires pyridoxal 5'-phosphate as cofactor.

The enzyme catalyses N(2)-succinyl-L-ornithine + 2-oxoglutarate = N-succinyl-L-glutamate 5-semialdehyde + L-glutamate. The protein operates within amino-acid degradation; L-arginine degradation via AST pathway; L-glutamate and succinate from L-arginine: step 3/5. In terms of biological role, catalyzes the transamination of N(2)-succinylornithine and alpha-ketoglutarate into N(2)-succinylglutamate semialdehyde and glutamate. Can also act as an acetylornithine aminotransferase. This is Succinylornithine transaminase from Salmonella heidelberg (strain SL476).